Consider the following 101-residue polypeptide: Small ribosomal subunit protein uS14 (101 aa).

Belongs to the universal ribosomal protein uS14 family. In terms of assembly, part of the 30S ribosomal subunit. Contacts proteins S3 and S10.

Binds 16S rRNA, required for the assembly of 30S particles and may also be responsible for determining the conformation of the 16S rRNA at the A site. In Dinoroseobacter shibae (strain DSM 16493 / NCIMB 14021 / DFL 12), this protein is Small ribosomal subunit protein uS14.